A 100-amino-acid chain; its full sequence is Ferredoxin (100 aa).

The propeptide occupies 1 to 8 (MLSQVCRF). The 2Fe-2S ferredoxin-type domain maps to 9-100 (GTITAVKGGV…GENDGAVFEL (92 aa)). [2Fe-2S] cluster contacts are provided by Cys-46, Cys-52, Cys-55, and Cys-85.

[2Fe-2S] cluster is required as a cofactor.

The protein localises to the hydrogenosome. Ferredoxins are iron-sulfur proteins that transfer electrons in a wide variety of metabolic reactions. It links pyruvate:ferredoxin oxidoreductase to hydrogenase. This chain is Ferredoxin, found in Trichomonas vaginalis.